Reading from the N-terminus, the 391-residue chain is Phosphoglycerate kinase (391 aa).

Substrate contacts are provided by residues 21–23, arginine 36, 59–62, arginine 113, and arginine 146; these read DLN and HLGR. ATP contacts are provided by residues lysine 197, glutamate 319, and 345–348; that span reads GGDT.

Belongs to the phosphoglycerate kinase family. In terms of assembly, monomer.

Its subcellular location is the cytoplasm. The catalysed reaction is (2R)-3-phosphoglycerate + ATP = (2R)-3-phospho-glyceroyl phosphate + ADP. The protein operates within carbohydrate degradation; glycolysis; pyruvate from D-glyceraldehyde 3-phosphate: step 2/5. The sequence is that of Phosphoglycerate kinase from Shewanella woodyi (strain ATCC 51908 / MS32).